A 210-amino-acid polypeptide reads, in one-letter code: 3-demethoxyubiquinol 3-hydroxylase (210 aa).

6 residues coordinate Fe cation: Glu-59, Glu-89, His-92, Glu-141, Glu-173, and His-176.

This sequence belongs to the COQ7 family. Fe cation serves as cofactor.

It localises to the cell membrane. It catalyses the reaction a 5-methoxy-2-methyl-3-(all-trans-polyprenyl)benzene-1,4-diol + AH2 + O2 = a 3-demethylubiquinol + A + H2O. It participates in cofactor biosynthesis; ubiquinone biosynthesis. Catalyzes the hydroxylation of 2-nonaprenyl-3-methyl-6-methoxy-1,4-benzoquinol during ubiquinone biosynthesis. The chain is 3-demethoxyubiquinol 3-hydroxylase from Marinomonas sp. (strain MWYL1).